The primary structure comprises 32 residues: Photosystem II reaction center protein Z (32 aa).

A helical transmembrane segment spans residues 9–29 (IIFSGSLIWVFLLIIVGFLNY).

The protein belongs to the PsbZ family. In terms of assembly, PSII is composed of 1 copy each of membrane proteins PsbA, PsbB, PsbC, PsbD, PsbE, PsbF, PsbH, PsbI, PsbJ, PsbK, PsbL, PsbM, PsbT, PsbY, PsbZ, Psb30/Ycf12, at least 3 peripheral proteins of the oxygen-evolving complex and a large number of cofactors. It forms dimeric complexes.

The protein resides in the plastid. It is found in the chloroplast thylakoid membrane. Its function is as follows. May control the interaction of photosystem II (PSII) cores with the light-harvesting antenna, regulates electron flow through the 2 photosystem reaction centers. PSII is a light-driven water plastoquinone oxidoreductase, using light energy to abstract electrons from H(2)O, generating a proton gradient subsequently used for ATP formation. This Euglena myxocylindracea protein is Photosystem II reaction center protein Z.